The following is a 179-amino-acid chain: Deoxyuridine 5'-triphosphate nucleotidohydrolase, mitochondrial (179 aa).

Residues 1–41 (MPIEQKYFSLFSNLFKRLTTNNNNNNYLKMAPPNFETFKVK) constitute a mitochondrion transit peptide. Residues 97–99 (RSG), 111–114 (GVID), glycine 122, arginine 165, and 170–171 (FG) each bind dUTP.

Belongs to the dUTPase family. In terms of assembly, homotrimer. Mg(2+) serves as cofactor.

It localises to the mitochondrion. It carries out the reaction dUTP + H2O = dUMP + diphosphate + H(+). Its pathway is pyrimidine metabolism; dUMP biosynthesis; dUMP from dCTP (dUTP route): step 2/2. Its function is as follows. This enzyme is involved in nucleotide metabolism: it produces dUMP, the immediate precursor of thymidine nucleotides and it decreases the intracellular concentration of dUTP so that uracil cannot be incorporated into DNA. The chain is Deoxyuridine 5'-triphosphate nucleotidohydrolase, mitochondrial (dut) from Dictyostelium discoideum (Social amoeba).